The primary structure comprises 327 residues: Phosphoenolpyruvate transferase (327 aa).

Asp59 contacts 7,8-didemethyl-8-hydroxy-5-deazariboflavin.

This sequence belongs to the CofD family. In terms of assembly, homodimer. The cofactor is Mg(2+).

The enzyme catalyses enolpyruvoyl-2-diphospho-5'-guanosine + 7,8-didemethyl-8-hydroxy-5-deazariboflavin = dehydro coenzyme F420-0 + GMP + H(+). It functions in the pathway cofactor biosynthesis; coenzyme F420 biosynthesis. Catalyzes the transfer of the phosphoenolpyruvate moiety from enoylpyruvoyl-2-diphospho-5'-guanosine (EPPG) to 7,8-didemethyl-8-hydroxy-5-deazariboflavin (FO) with the formation of dehydro coenzyme F420-0 and GMP. The protein is Phosphoenolpyruvate transferase of Mycolicibacterium smegmatis (strain ATCC 700084 / mc(2)155) (Mycobacterium smegmatis).